The following is a 501-amino-acid chain: MCQVEEDYNGLECNQEKIPVSGLNRKCMKCKEGTAVLIIRVSDAFCRSCFKEYFIHKFRAMLGKNRVIFPQEKVLLAVSGGAASCTMLSQVQEGLSRDAPKKLRFMPGIVYIDDGGACGRSEDERQTSISQLKNIFTQTGFPYFIVPLEKVFSLPTSVLVPGTSDPDPSNPCYKQAVDKYLKEKQKLREEEAVCAVAQLNLEDSAYLPEHKLALQRLFSSLKTLSAKQEMLQTLRQHLILHVARENSYSKVMMGESCSRLAVKLLSNIALGRGAALASDTGFSDPRFGDVVIVRPMRDYSSKEITFYNRMFHVPSVFIPGLDTKSHDKASIQRLTESFVTNLQADFPSTVSTIYRTSEKLHTVRPPQSQSTEPEPASKCLLCLCALDTTADKASAFHATLISEQLSQLRLQEGSVDLVAGSSDQCCVEDQTCGTSGCCSSKRTPVQQDLKTLLCYSCRLTVKDMAAVNTLPPYILTEAEKRQRRSQMKVEISEYLLEEDQD.

Belongs to the CTU2/NCS2 family.

The protein localises to the cytoplasm. It participates in tRNA modification; 5-methoxycarbonylmethyl-2-thiouridine-tRNA biosynthesis. In terms of biological role, plays a central role in 2-thiolation of mcm(5)S(2)U at tRNA wobble positions of tRNA(Lys), tRNA(Glu) and tRNA(Gln). May act by forming a heterodimer with ctu1/atpbd3 that ligates sulfur from thiocarboxylated urm1 onto the uridine of tRNAs at wobble position. The sequence is that of Cytoplasmic tRNA 2-thiolation protein 2 (ctu2) from Danio rerio (Zebrafish).